We begin with the raw amino-acid sequence, 35 residues long: Photosystem II reaction center protein T (35 aa).

Residues 3 to 23 traverse the membrane as a helical segment; sequence ALVYTFLLVSTLGIIFFAIFF.

The protein belongs to the PsbT family. As to quaternary structure, PSII is composed of 1 copy each of membrane proteins PsbA, PsbB, PsbC, PsbD, PsbE, PsbF, PsbH, PsbI, PsbJ, PsbK, PsbL, PsbM, PsbT, PsbY, PsbZ, Psb30/Ycf12, at least 3 peripheral proteins of the oxygen-evolving complex and a large number of cofactors. It forms dimeric complexes.

The protein localises to the plastid. Its subcellular location is the chloroplast thylakoid membrane. In terms of biological role, found at the monomer-monomer interface of the photosystem II (PS II) dimer, plays a role in assembly and dimerization of PSII. PSII is a light-driven water plastoquinone oxidoreductase, using light energy to abstract electrons from H(2)O, generating a proton gradient subsequently used for ATP formation. In Nelumbo lutea (American lotus), this protein is Photosystem II reaction center protein T.